The chain runs to 219 residues: Vacuolar protein sorting-associated protein 32 homolog 2 (219 aa).

2 coiled-coil regions span residues 10-41 (KQEA…KKAG) and 117-176 (TNID…QLLQ). Positions 168-219 (EELESQLLQPATTAPPLPSVPVPAGRQPARPVPQKRTAEEEELAALQAEMAL) are disordered.

Belongs to the SNF7 family. As to quaternary structure, component of the endosomal sorting required for transport complex III (ESCRT-III), composed at least of VPS2, VPS20, VPS24 and VPS32. Interacts with SKD1. Interacts with BRO1/ALIX.

It is found in the endosome. In terms of biological role, component of the ESCRT-III complex, which is required for multivesicular bodies (MVBs) formation and sorting of endosomal cargo proteins into MVBs. The ESCRT-III complex is probably involved in the concentration of MVB cargo. This Arabidopsis thaliana (Mouse-ear cress) protein is Vacuolar protein sorting-associated protein 32 homolog 2 (VPS32.2).